A 431-amino-acid polypeptide reads, in one-letter code: Glutamate-1-semialdehyde 2,1-aminomutase (431 aa).

Residue K264 is modified to N6-(pyridoxal phosphate)lysine.

The protein belongs to the class-III pyridoxal-phosphate-dependent aminotransferase family. HemL subfamily. As to quaternary structure, homodimer. Pyridoxal 5'-phosphate is required as a cofactor.

The protein resides in the cytoplasm. It catalyses the reaction (S)-4-amino-5-oxopentanoate = 5-aminolevulinate. It participates in porphyrin-containing compound metabolism; protoporphyrin-IX biosynthesis; 5-aminolevulinate from L-glutamyl-tRNA(Glu): step 2/2. This Clostridium beijerinckii (strain ATCC 51743 / NCIMB 8052) (Clostridium acetobutylicum) protein is Glutamate-1-semialdehyde 2,1-aminomutase.